The primary structure comprises 229 residues: MIQTTFPDRAVMAELVAKMLWEIKAVHFNAGEPYKLSSGMASPVYIDCRKLLSYPRIRSTVMDFAASTLMRDAGFEQFDCIAGGETAGIPFAALLADRLGLPMIYVRKQPKGHGRNAQIEGNMPEGSRVLVIEDLTTAGGSMFKFIDAVRAAGGIVDHGIALFFYDIFGQQRFTDGKVRLHHIATWRNVLAVAKAQQLFDDKTLAEVEAFLDAPLAWSGRNGGVCELSL.

5-phospho-alpha-D-ribose 1-diphosphate-binding positions include arginine 107, lysine 108, lysine 111, histidine 113, and 133 to 141 (EDLTTAGGS). Threonine 137 is a binding site for orotate.

The protein belongs to the purine/pyrimidine phosphoribosyltransferase family. PyrE subfamily. Homodimer. Requires Mg(2+) as cofactor.

It carries out the reaction orotidine 5'-phosphate + diphosphate = orotate + 5-phospho-alpha-D-ribose 1-diphosphate. It participates in pyrimidine metabolism; UMP biosynthesis via de novo pathway; UMP from orotate: step 1/2. Its function is as follows. Catalyzes the transfer of a ribosyl phosphate group from 5-phosphoribose 1-diphosphate to orotate, leading to the formation of orotidine monophosphate (OMP). The protein is Orotate phosphoribosyltransferase of Rhizobium etli (strain CIAT 652).